The chain runs to 312 residues: MSAAELPPVVVLMGPTASGKSQLAIELANALDGEIVSVDSSLVYRGMDIGTAKPTPTERAAVPHHLIDVLDPSEVFSTGRFRDEALALIADITARGRLPVLAGGTMLYFNALLRGLAELPSADPDLRREIETRAARDGWHALHAELARIDPPAAARIHPNDPQRLQRALEVFYLTGRTLSDLCEGSRSPELPFRPLRIVLAPSSRAVLAERIAERFRRMLEEGFLEEVEALYRRGDLNETLPSIRAVGYRQAWGYLQGDYGFDTFVERAIIATRQFAKRQCTWLRKETEATWLETGTPGLSDRAAKEVRARL.

14-21 (GPTASGKS) serves as a coordination point for ATP. 16–21 (TASGKS) provides a ligand contact to substrate. 2 interaction with substrate tRNA regions span residues 39–42 (DSSL) and 163–167 (QRLQR).

This sequence belongs to the IPP transferase family. Monomer. It depends on Mg(2+) as a cofactor.

It catalyses the reaction adenosine(37) in tRNA + dimethylallyl diphosphate = N(6)-dimethylallyladenosine(37) in tRNA + diphosphate. Its function is as follows. Catalyzes the transfer of a dimethylallyl group onto the adenine at position 37 in tRNAs that read codons beginning with uridine, leading to the formation of N6-(dimethylallyl)adenosine (i(6)A). The sequence is that of tRNA dimethylallyltransferase from Methylococcus capsulatus (strain ATCC 33009 / NCIMB 11132 / Bath).